A 299-amino-acid chain; its full sequence is Oxygen-dependent coproporphyrinogen-III oxidase (299 aa).

Position 92 (Ser92) interacts with substrate. Residues His96 and His106 each contribute to the a divalent metal cation site. Residue His106 is the Proton donor of the active site. A substrate-binding site is contributed by 108–110 (NVR). The a divalent metal cation site is built by His145 and His175. Residues 239-274 (YVEFNLVYDRGTLFGLQSGGRAESILMSLPPRVRWE) are important for dimerization. Residue 257-259 (GGR) coordinates substrate.

Belongs to the aerobic coproporphyrinogen-III oxidase family. As to quaternary structure, homodimer. It depends on a divalent metal cation as a cofactor.

Its subcellular location is the cytoplasm. It catalyses the reaction coproporphyrinogen III + O2 + 2 H(+) = protoporphyrinogen IX + 2 CO2 + 2 H2O. The protein operates within porphyrin-containing compound metabolism; protoporphyrin-IX biosynthesis; protoporphyrinogen-IX from coproporphyrinogen-III (O2 route): step 1/1. In terms of biological role, involved in the heme biosynthesis. Catalyzes the aerobic oxidative decarboxylation of propionate groups of rings A and B of coproporphyrinogen-III to yield the vinyl groups in protoporphyrinogen-IX. The polypeptide is Oxygen-dependent coproporphyrinogen-III oxidase (Xanthomonas axonopodis pv. citri (strain 306)).